Here is a 468-residue protein sequence, read N- to C-terminus: ATP synthase subunit beta (468 aa).

G155 to T162 provides a ligand contact to ATP.

Belongs to the ATPase alpha/beta chains family. In terms of assembly, F-type ATPases have 2 components, CF(1) - the catalytic core - and CF(0) - the membrane proton channel. CF(1) has five subunits: alpha(3), beta(3), gamma(1), delta(1), epsilon(1). CF(0) has three main subunits: a(1), b(2) and c(9-12). The alpha and beta chains form an alternating ring which encloses part of the gamma chain. CF(1) is attached to CF(0) by a central stalk formed by the gamma and epsilon chains, while a peripheral stalk is formed by the delta and b chains.

The protein resides in the cell membrane. It catalyses the reaction ATP + H2O + 4 H(+)(in) = ADP + phosphate + 5 H(+)(out). In terms of biological role, produces ATP from ADP in the presence of a proton gradient across the membrane. The catalytic sites are hosted primarily by the beta subunits. In Streptococcus agalactiae serotype III (strain NEM316), this protein is ATP synthase subunit beta.